The primary structure comprises 448 residues: Beta-glucosidase B (448 aa).

The active-site Proton donor is Glu-167. The active-site Nucleophile is the Glu-356.

This sequence belongs to the glycosyl hydrolase 1 family.

The catalysed reaction is Hydrolysis of terminal, non-reducing beta-D-glucosyl residues with release of beta-D-glucose.. The chain is Beta-glucosidase B (bglB) from Paenibacillus polymyxa (Bacillus polymyxa).